We begin with the raw amino-acid sequence, 89 residues long: Luqin-like RYamide peptides lury-1 (89 aa).

The N-terminal stretch at 1–19 (MLTRVPVLILAVIVMLALC) is a signal peptide. The propeptide occupies 20-26 (QEPEKPE). 2 positions are modified to tyrosine amide: Tyr35 and Tyr43. Positions 47 to 89 (SGNLMESSQNSLTEESSDVVCQLIDGKYICLPVDAVRFRPFFL) are excised as a propeptide.

In terms of tissue distribution, expressed in the M1 and M2 pharyngeal neurons from where the LURY-1-1 and LURY-1-2 peptides are secreted.

Its subcellular location is the secreted. Acts as a ligand for the npr-22 receptor and controls food-related processes including feeding, lifespan, egg-laying and roaming behavior. Secreted in the presence of food, leading to reduced feeding and roaming behavior and increased egg laying and lifespan. Activity may be latent under normal conditions but induced under conditions that cause hyperactivation of the pharynx such as abrupt refeeding after starvation. This is Luqin-like RYamide peptides lury-1 from Caenorhabditis elegans.